Here is a 252-residue protein sequence, read N- to C-terminus: Putative hydro-lyase OB3382 (252 aa).

Belongs to the D-glutamate cyclase family.

This is Putative hydro-lyase OB3382 from Oceanobacillus iheyensis (strain DSM 14371 / CIP 107618 / JCM 11309 / KCTC 3954 / HTE831).